The sequence spans 146 residues: Ubiquitin-conjugating enzyme E2 variant 1D (146 aa).

Residues 13-146 (PRNFRLLEEL…LVQPPEGTCF (134 aa)) enclose the UBC core domain.

It belongs to the ubiquitin-conjugating enzyme family. Heterodimer with UBC35 or UBC36. As to expression, expressed in roots, shoots, leaves, stems, flowers and pollen.

Its function is as follows. Has no ubiquitin ligase activity on its own. The heterodimer with UBC catalyzes the synthesis of non-canonical poly-ubiquitin chains that are linked through 'Lys-63'. This type of poly-ubiquitination does not lead to protein degradation by the proteasome. Mediates transcriptional activation of target genes. May play a role in the control of progress through the cell cycle and differentiation. Involved in the error-free DNA repair pathway and contributes to the survival of cells after DNA damage. This is Ubiquitin-conjugating enzyme E2 variant 1D (UEV1D) from Arabidopsis thaliana (Mouse-ear cress).